The following is a 62-amino-acid chain: Photosystem II reaction center protein Z (62 aa).

2 consecutive transmembrane segments (helical) span residues 8–28 and 41–61; these read SVFA…VVLA and FSGA…NSFI.

Belongs to the PsbZ family. PSII is composed of 1 copy each of membrane proteins PsbA, PsbB, PsbC, PsbD, PsbE, PsbF, PsbH, PsbI, PsbJ, PsbK, PsbL, PsbM, PsbT, PsbY, PsbZ, Psb30/Ycf12, at least 3 peripheral proteins of the oxygen-evolving complex and a large number of cofactors. It forms dimeric complexes.

It is found in the plastid. The protein localises to the chloroplast thylakoid membrane. Its function is as follows. May control the interaction of photosystem II (PSII) cores with the light-harvesting antenna, regulates electron flow through the 2 photosystem reaction centers. PSII is a light-driven water plastoquinone oxidoreductase, using light energy to abstract electrons from H(2)O, generating a proton gradient subsequently used for ATP formation. This is Photosystem II reaction center protein Z from Staurastrum punctulatum (Green alga).